Reading from the N-terminus, the 801-residue chain is Lon protease 2 (801 aa).

Positions 14 to 209 constitute a Lon N-terminal domain; the sequence is LPMLPVRDIV…LVNEILAAEL (196 aa). 361–368 serves as a coordination point for ATP; that stretch reads GPPGVGKT. A Lon proteolytic domain is found at 597 to 778; sequence DSQVGVVQGL…DEVFAVAFDK (182 aa). Residues S684 and K727 contribute to the active site. The span at 780–791 shows a compositional bias: basic and acidic residues; it reads AKGQEKKPAAKK. A disordered region spans residues 780–801; that stretch reads AKGQEKKPAAKKDPKKTKSLAA. The segment covering 792–801 has biased composition (basic residues); that stretch reads DPKKTKSLAA.

Belongs to the peptidase S16 family. In terms of assembly, homohexamer. Organized in a ring with a central cavity.

It is found in the cytoplasm. The enzyme catalyses Hydrolysis of proteins in presence of ATP.. In terms of biological role, ATP-dependent serine protease that mediates the selective degradation of mutant and abnormal proteins as well as certain short-lived regulatory proteins. Required for cellular homeostasis and for survival from DNA damage and developmental changes induced by stress. Degrades polypeptides processively to yield small peptide fragments that are 5 to 10 amino acids long. Binds to DNA in a double-stranded, site-specific manner. This chain is Lon protease 2, found in Bdellovibrio bacteriovorus (strain ATCC 15356 / DSM 50701 / NCIMB 9529 / HD100).